A 142-amino-acid chain; its full sequence is Putative phosphatidylglycerol/phosphatidylinositol transfer protein 2 (142 aa).

Positions 1–20 (MKFYLYLSILLILLTSTSFG) are cleaved as a signal peptide.

Belongs to the NPC2 family. Monomer.

In terms of biological role, catalyzes the intermembrane transfer of phosphatidylglycerol and phosphatidylinositol. This chain is Putative phosphatidylglycerol/phosphatidylinositol transfer protein 2, found in Dictyostelium discoideum (Social amoeba).